Reading from the N-terminus, the 623-residue chain is AM-toxin biosynthesis protein 12-2 (623 aa).

A disordered region spans residues 110–129 (TIPGTSQAKNTEPDHQASGL).

The protein operates within mycotoxin biosynthesis. Functionally, part of the gene clusters that mediate the biosynthesis of AM-toxins, host-selective toxins (HSTs) causing Alternaria blotch on apple, a worldwide distributed disease. AM-toxins are cyclic depsipeptides containing the 3 residues 2-hydroxy-isovaleric acid (2-HIV), dehydroalanine, L-alanine which are common for all 3 AM-toxins I to III. The fourth precursor is L-alpha-amino-methoxyphenyl-valeric acid (L-Amv) for AM-toxin I, L-alpha-amino-phenyl-valeric acid (L-Apv) for AM-toxin II, and L-alpha-amino-hydroxyphenyl-valeric acid (L-Ahv) for AM-toxin III. AM-toxins have two target sites for affecting susceptible apple cells; they cause invagination of the plasma membrane and electrolyte loss and chloroplast disorganization. The non-ribosomal peptide synthetase AMT1 contains 4 catalytic modules and is responsible for activation of each residue in AM-toxin. The aldo-keto reductase AMT2 catalyzes the conversion of 2-keto-isovaleric acid (2-KIV) to 2-hydroxy-isovaleric acid (2-HIV), one of the precursor residues incorporated by AMT1 during AM-toxin biosynthesis, by reduction of its ketone to an alcohol. The cytochrome P450 monooxygenase AMT3 and the thioesterase AMT4 are also important for AM-toxin production, but their exact function within the AM-toxin biosynthesis are not known yet. Up to 21 proteins (including AMT1 to AMT4) are predicted to be involved in AM-toxin biosynthesis since their expression ishighly up-regulated in AM-toxin-producing cultures. The polypeptide is AM-toxin biosynthesis protein 12-2 (Alternaria alternata (Alternaria rot fungus)).